Here is a 243-residue protein sequence, read N- to C-terminus: Adenylate dimethylallyltransferase (243 aa).

Belongs to the isopentenyl transferase family.

The catalysed reaction is dimethylallyl diphosphate + AMP = N(6)-(dimethylallyl)adenosine 5'-phosphate + diphosphate. Its function is as follows. Transfers dimethylallyl groups to AMP as part of the biosynthesis of cytokinin phytohormones. This Rhizobium rhizogenes (Agrobacterium rhizogenes) protein is Adenylate dimethylallyltransferase (tzs).